We begin with the raw amino-acid sequence, 423 residues long: Tyrosine--tRNA ligase (423 aa).

Residue Tyr-35 participates in L-tyrosine binding. The short motif at 40–49 (PTAPSLHAGH) is the 'HIGH' region element. L-tyrosine contacts are provided by Tyr-170 and Gln-174. The 'KMSKS' region signature appears at 230–234 (KFGKS). Lys-233 is an ATP binding site. The region spanning 355-412 (DLITDLLVATGLSASKGAARRTIAEGGVSVNNVKIDSDEWTPQASDFLHGRWLVLRRG) is the S4 RNA-binding domain.

It belongs to the class-I aminoacyl-tRNA synthetase family. TyrS type 1 subfamily. As to quaternary structure, homodimer.

It localises to the cytoplasm. The enzyme catalyses tRNA(Tyr) + L-tyrosine + ATP = L-tyrosyl-tRNA(Tyr) + AMP + diphosphate + H(+). In terms of biological role, catalyzes the attachment of tyrosine to tRNA(Tyr) in a two-step reaction: tyrosine is first activated by ATP to form Tyr-AMP and then transferred to the acceptor end of tRNA(Tyr). The chain is Tyrosine--tRNA ligase from Mycobacterium sp. (strain JLS).